The following is a 631-amino-acid chain: Phosphomethylpyrimidine synthase (631 aa).

Substrate is bound by residues asparagine 239, methionine 268, tyrosine 297, histidine 333, 353–355 (SRG), 394–397 (DGLR), and glutamate 433. Residue histidine 437 coordinates Zn(2+). Tyrosine 460 is a binding site for substrate. Zn(2+) is bound at residue histidine 501. [4Fe-4S] cluster is bound by residues cysteine 581, cysteine 584, and cysteine 589.

The protein belongs to the ThiC family. Homodimer. The cofactor is [4Fe-4S] cluster.

The enzyme catalyses 5-amino-1-(5-phospho-beta-D-ribosyl)imidazole + S-adenosyl-L-methionine = 4-amino-2-methyl-5-(phosphooxymethyl)pyrimidine + CO + 5'-deoxyadenosine + formate + L-methionine + 3 H(+). It functions in the pathway cofactor biosynthesis; thiamine diphosphate biosynthesis. Its function is as follows. Catalyzes the synthesis of the hydroxymethylpyrimidine phosphate (HMP-P) moiety of thiamine from aminoimidazole ribotide (AIR) in a radical S-adenosyl-L-methionine (SAM)-dependent reaction. The sequence is that of Phosphomethylpyrimidine synthase from Salmonella paratyphi A (strain AKU_12601).